The sequence spans 124 residues: Small ribosomal subunit protein uS13 (124 aa).

A disordered region spans residues 99–124; that stretch reads PCRGQKTKTNARTCKGPKKTVANKKK. The segment covering 113-124 has biased composition (basic residues); that stretch reads KGPKKTVANKKK.

It belongs to the universal ribosomal protein uS13 family. In terms of assembly, part of the 30S ribosomal subunit. Forms a loose heterodimer with protein S19. Forms two bridges to the 50S subunit in the 70S ribosome.

Functionally, located at the top of the head of the 30S subunit, it contacts several helices of the 16S rRNA. In the 70S ribosome it contacts the 23S rRNA (bridge B1a) and protein L5 of the 50S subunit (bridge B1b), connecting the 2 subunits; these bridges are implicated in subunit movement. Contacts the tRNAs in the A and P-sites. This Lachnospira eligens (strain ATCC 27750 / DSM 3376 / VPI C15-48 / C15-B4) (Eubacterium eligens) protein is Small ribosomal subunit protein uS13.